The primary structure comprises 549 residues: Oxygen-dependent choline dehydrogenase (549 aa).

4 to 33 (DFVIIGSGSAGSALAYRLSEDGANSVVVLE) lines the FAD pocket. Catalysis depends on His-465, which acts as the Proton acceptor.

Belongs to the GMC oxidoreductase family. Requires FAD as cofactor.

It carries out the reaction choline + A = betaine aldehyde + AH2. The enzyme catalyses betaine aldehyde + NAD(+) + H2O = glycine betaine + NADH + 2 H(+). It functions in the pathway amine and polyamine biosynthesis; betaine biosynthesis via choline pathway; betaine aldehyde from choline (cytochrome c reductase route): step 1/1. Its function is as follows. Involved in the biosynthesis of the osmoprotectant glycine betaine. Catalyzes the oxidation of choline to betaine aldehyde and betaine aldehyde to glycine betaine at the same rate. This Sinorhizobium medicae (strain WSM419) (Ensifer medicae) protein is Oxygen-dependent choline dehydrogenase.